A 79-amino-acid chain; its full sequence is Translational regulator CsrA (79 aa).

This sequence belongs to the CsrA/RsmA family. In terms of assembly, homodimer; the beta-strands of each monomer intercalate to form a hydrophobic core, while the alpha-helices form wings that extend away from the core.

Its subcellular location is the cytoplasm. Functionally, a translational regulator that binds mRNA to regulate translation initiation and/or mRNA stability. Usually binds in the 5'-UTR at or near the Shine-Dalgarno sequence preventing ribosome-binding, thus repressing translation. Its main target seems to be the major flagellin gene, while its function is anatagonized by FliW. The sequence is that of Translational regulator CsrA from Geobacter sulfurreducens (strain ATCC 51573 / DSM 12127 / PCA).